The primary structure comprises 386 residues: Cytochrome b (386 aa).

A run of 4 helical transmembrane segments spans residues 32 to 52 (TGSLTGLCLVIQIASGIFTAM), 76 to 98 (YLIRYIHANGASFFFVCMYGHIG), 113 to 133 (VWVIGVIIFITTMATAFTGYC), and 179 to 199 (FFALHYLCPFILAALVVMHLM). H82 and H96 together coordinate heme b. Residues H183 and H197 each coordinate heme b. H202 provides a ligand contact to a ubiquinone. The next 4 membrane-spanning stretches (helical) occupy residues 225-245 (FVFKDLVTVFVFLLIFSTFVF), 289-309 (LGGVIAMFGSILITLVLPVTD), 321-341 (FSKTLYFTFTYNFILLGQLGQ), and 348-368 (FIEMGQIATFNYFTYFIVLVP).

The protein belongs to the cytochrome b family. In terms of assembly, fungal cytochrome b-c1 complex contains 10 subunits; 3 respiratory subunits, 2 core proteins and 5 low-molecular weight proteins. Cytochrome b-c1 complex is a homodimer. Heme b serves as cofactor.

Its subcellular location is the mitochondrion inner membrane. Functionally, component of the ubiquinol-cytochrome c reductase complex (complex III or cytochrome b-c1 complex) that is part of the mitochondrial respiratory chain. The b-c1 complex mediates electron transfer from ubiquinol to cytochrome c. Contributes to the generation of a proton gradient across the mitochondrial membrane that is then used for ATP synthesis. This chain is Cytochrome b (COB), found in Wickerhamomyces pijperi (Yeast).